A 220-amino-acid chain; its full sequence is Ribosome maturation factor RimM (220 aa).

Residues 143–220 (EGEFYWVDLI…RIVVDWGLDY (78 aa)) enclose the PRC barrel domain.

Belongs to the RimM family. Binds ribosomal protein uS19.

It localises to the cytoplasm. Functionally, an accessory protein needed during the final step in the assembly of 30S ribosomal subunit, possibly for assembly of the head region. Essential for efficient processing of 16S rRNA. May be needed both before and after RbfA during the maturation of 16S rRNA. It has affinity for free ribosomal 30S subunits but not for 70S ribosomes. This is Ribosome maturation factor RimM from Cupriavidus metallidurans (strain ATCC 43123 / DSM 2839 / NBRC 102507 / CH34) (Ralstonia metallidurans).